We begin with the raw amino-acid sequence, 449 residues long: Protein tweety homolog 1 (449 aa).

Residues 1–43 (MSSSHGYRASWWTYILHQVPHTNFQFEVVDNQFAPQEWPYQQA) lie on the Extracellular side of the membrane. A helical membrane pass occupies residues 44–64 (LLFLASIAGLCLAISLILICV). The Cytoplasmic segment spans residues 65–86 (YLIRFCCCSSQEDDDSKSHRVC). A helical transmembrane segment spans residues 87–107 (CVTWSCVAAVIICCAGIGIGF). At 108 to 212 (YGNSETNDGV…QVNFIEDYRW (105 aa)) the chain is on the extracellular side. Asn-128 carries an N-linked (GlcNAc...) asparagine glycan. Residues 213-233 (LAYILLLLLDLIICLFTLLGL) form a helical membrane-spanning segment. The Cytoplasmic portion of the chain corresponds to 234 to 238 (AKQIK). Residues 239 to 259 (WLVIVMTVVSFFVLLLSWGSM) form a helical membrane-spanning segment. Topologically, residues 260 to 388 (GLEMATAVGL…LKGLCYDGME (129 aa)) are extracellular. Cystine bridges form between Cys-273–Cys-383 and Cys-301–Cys-368. N-linked (GlcNAc...) asparagine glycosylation is found at Asn-282 and Asn-353. The chain crosses the membrane as a helical span at residues 389–409 (GILFLLLFSFLSALSFTAAIC). Residues 410–449 (SLPRAWKRFQNRDLDYDDMDEDDPFNPQESKRFVQWQSSI) lie on the Cytoplasmic side of the membrane.

The protein belongs to the tweety family. In terms of assembly, homotetramer; disulfide-linked. Homodimer.

It is found in the cell membrane. It catalyses the reaction chloride(in) = chloride(out). The enzyme catalyses L-glutamate(out) = L-glutamate(in). In terms of biological role, may act as a calcium-independent, swelling-dependent volume-regulated anion channel (VRAC-swell) which plays a pivotal role in the process of regulatory volume decrease (RVD) in the brain through the efflux of anions like chloride and organic osmolytes like glutamate. The sequence is that of Protein tweety homolog 1 (ttyh1) from Xenopus tropicalis (Western clawed frog).